We begin with the raw amino-acid sequence, 126 residues long: Holo-[acyl-carrier-protein] synthase (126 aa).

Mg(2+) is bound by residues D9 and E58.

It belongs to the P-Pant transferase superfamily. AcpS family. The cofactor is Mg(2+).

Its subcellular location is the cytoplasm. It catalyses the reaction apo-[ACP] + CoA = holo-[ACP] + adenosine 3',5'-bisphosphate + H(+). Its function is as follows. Transfers the 4'-phosphopantetheine moiety from coenzyme A to a Ser of acyl-carrier-protein. The sequence is that of Holo-[acyl-carrier-protein] synthase from Hamiltonella defensa subsp. Acyrthosiphon pisum (strain 5AT).